The primary structure comprises 180 residues: Superoxide dismutase [Cu-Zn] (180 aa).

Positions 1-19 are cleaved as a signal peptide; it reads MFMNLLTQVSNAIFPQVEA. Positions 68, 70, and 85 each coordinate Cu cation. Cysteines 79 and 171 form a disulfide. Zn(2+) is bound by residues His85, His93, His102, and Asp105. His142 is a binding site for Cu cation.

The protein belongs to the Cu-Zn superoxide dismutase family. In terms of assembly, homodimer. The cofactor is Cu cation. Requires Zn(2+) as cofactor.

It is found in the cytoplasm. It carries out the reaction 2 superoxide + 2 H(+) = H2O2 + O2. The insertion of copper which activates the protein requires glutathione. This is independent of copper chaperone for SOD1 (CCS), which activates orthologs. In terms of biological role, protects cells against oxidative stress by converting superoxide radicals to hydrogen peroxide. Required for normal brood size. May be involved in regulating mpk-1 phosphorylation downstream of phosphatase ptp-2 during oocyte maturation. This Caenorhabditis elegans protein is Superoxide dismutase [Cu-Zn] (sod-1).